Here is a 158-residue protein sequence, read N- to C-terminus: Placenta growth factor (158 aa).

Positions 1–18 (MLVMKLFTCFLQVLAGLA) are cleaved as a signal peptide. N-linked (GlcNAc...) asparagine glycans are attached at residues N29 and N30. Disulfide bonds link C48–C90, C79–C125, and C83–C127. N97 is a glycosylation site (N-linked (GlcNAc...) asparagine). Positions 136–158 (AERRKTKGKRKRSRNSQTEEPHP) are disordered. A compositionally biased stretch (basic residues) spans 137 to 149 (ERRKTKGKRKRSR).

The protein belongs to the PDGF/VEGF growth factor family. As to quaternary structure, antiparallel homodimer; disulfide-linked. Also found as heterodimer with VEGFA/VEGF.

The protein localises to the secreted. In terms of biological role, growth factor active in angiogenesis and endothelial cell growth, stimulating their proliferation and migration. It binds to the receptor FLT1/VEGFR-1. Also promotes cell tumor growth. The sequence is that of Placenta growth factor (Pgf) from Mus musculus (Mouse).